Reading from the N-terminus, the 717-residue chain is UvrABC system protein C (717 aa).

The 80-residue stretch at 16 to 95 (DSPGVYKFRD…IKEFDPRFNV (80 aa)) folds into the GIY-YIG domain. The UVR domain maps to 208-243 (GTYIRRLEKDMMQAAEEMEYERAARLRDDAEALKRA). The disordered stretch occupies residues 467–548 (ERTGEWEEAP…PREDDGRPKR (82 aa)). The segment covering 477 to 522 (EAAPGSASVHASATGPAATGQATAGPAAMGQAAAGPVSTGPAATGP) has biased composition (low complexity).

It belongs to the UvrC family. Interacts with UvrB in an incision complex.

The protein resides in the cytoplasm. Functionally, the UvrABC repair system catalyzes the recognition and processing of DNA lesions. UvrC both incises the 5' and 3' sides of the lesion. The N-terminal half is responsible for the 3' incision and the C-terminal half is responsible for the 5' incision. This Streptomyces griseus subsp. griseus (strain JCM 4626 / CBS 651.72 / NBRC 13350 / KCC S-0626 / ISP 5235) protein is UvrABC system protein C.